Here is a 459-residue protein sequence, read N- to C-terminus: Chromosomal replication initiator protein DnaA (459 aa).

The tract at residues 1–74 (MMEMPIDNLW…ANVVQSILGH (74 aa)) is domain I, interacts with DnaA modulators. The tract at residues 74-117 (HPVEIYITVAKGEEFEEIGGGGEWELPTTNIINETPNQNRQPNT) is domain II. A domain III, AAA+ region region spans residues 118 to 334 (ELNAKYVFSR…GALTRALAYI (217 aa)). 4 residues coordinate ATP: Gly-162, Gly-164, Lys-165, and Thr-166. The interval 335–459 (SIWGLPMTVA…IKMNSRSRKP (125 aa)) is domain IV, binds dsDNA.

This sequence belongs to the DnaA family. As to quaternary structure, oligomerizes as a right-handed, spiral filament on DNA at oriC.

Its subcellular location is the cytoplasm. In terms of biological role, plays an essential role in the initiation and regulation of chromosomal replication. ATP-DnaA binds to the origin of replication (oriC) to initiate formation of the DNA replication initiation complex once per cell cycle. Binds the DnaA box (a 9 base pair repeat at the origin) and separates the double-stranded (ds)DNA. Forms a right-handed helical filament on oriC DNA; dsDNA binds to the exterior of the filament while single-stranded (ss)DNA is stabiized in the filament's interior. The ATP-DnaA-oriC complex binds and stabilizes one strand of the AT-rich DNA unwinding element (DUE), permitting loading of DNA polymerase. After initiation quickly degrades to an ADP-DnaA complex that is not apt for DNA replication. Binds acidic phospholipids. This Nostoc sp. (strain PCC 7120 / SAG 25.82 / UTEX 2576) protein is Chromosomal replication initiator protein DnaA.